The following is a 316-amino-acid chain: uncharacterized protein (316 aa).

Residues 1–70 are Cytoplasmic-facing; it reads SFAYSGNSES…NNDEIGIWNY (70 aa). Residues 71–91 traverse the membrane as a helical segment; the sequence is ISVAEMGGVLLFLSYWIWTCL. Position 92 (His-92) is a topological domain, lumenal. A helical transmembrane segment spans residues 93 to 113; sequence FSKIIFPAQKVICLYIFLFAL. Topologically, residues 114–170 are cytoplasmic; the sequence is NQTLQECIEEYVFSSECIKYRQFYSVYEIIDFLRTNFYRLFVIYCALGFGITRTVPK. A helical transmembrane segment spans residues 171–191; the sequence is YLMIKGISIVIALCSVYWISL. Residues 192-194 lie on the Lumenal side of the membrane; the sequence is YKD. Residues 195–215 form a helical membrane-spanning segment; that stretch reads VYVVSEIFDMIQYEVSPAIWV. Residues 216–245 are Cytoplasmic-facing; the sequence is YSICHLLKQCTSVTTYENASKARFFRRMLN. A helical transmembrane segment spans residues 246–266; it reads AFIFIFCASPMLHYLSNIIFG. The Lumenal portion of the chain corresponds to 267–316; that stretch reads NFDYRLSVIIGDLFTFMEKIAFPCYIMFPTHNEALAYNRNVAEEAQEKMI.

The protein belongs to the UPF0742 family.

Its subcellular location is the endoplasmic reticulum. It is found in the membrane. This is an uncharacterized protein from Schizosaccharomyces pombe (strain 972 / ATCC 24843) (Fission yeast).